The chain runs to 548 residues: Chaperonin GroEL (548 aa).

Residues 29–32, Lys50, 86–90, Gly414, and Asp493 contribute to the ATP site; these read THGP and DGTTT.

This sequence belongs to the chaperonin (HSP60) family. In terms of assembly, forms a cylinder of 14 subunits composed of two heptameric rings stacked back-to-back. Interacts with the co-chaperonin GroES.

The protein resides in the cytoplasm. It catalyses the reaction ATP + H2O + a folded polypeptide = ADP + phosphate + an unfolded polypeptide.. Together with its co-chaperonin GroES, plays an essential role in assisting protein folding. The GroEL-GroES system forms a nano-cage that allows encapsulation of the non-native substrate proteins and provides a physical environment optimized to promote and accelerate protein folding. In Desulfatibacillum aliphaticivorans, this protein is Chaperonin GroEL.